We begin with the raw amino-acid sequence, 234 residues long: Enterobactin synthase component D (234 aa).

Positions 107, 109, and 152 each coordinate Mg(2+).

This sequence belongs to the P-Pant transferase superfamily. EntD family. As to quaternary structure, entB, EntD, EntE, and EntF form a multienzyme complex called enterobactin synthase. Mg(2+) serves as cofactor.

Its subcellular location is the membrane. It carries out the reaction apo-[aryl-carrier protein] + CoA = holo-[aryl-carrier protein] + adenosine 3',5'-bisphosphate + H(+). The enzyme catalyses apo-[peptidyl-carrier protein] + CoA = holo-[peptidyl-carrier protein] + adenosine 3',5'-bisphosphate + H(+). Its pathway is siderophore biosynthesis; enterobactin biosynthesis. Involved in the biosynthesis of the siderophore enterobactin (enterochelin), which is a macrocyclic trimeric lactone of N-(2,3-dihydroxybenzoyl)-serine. The serine trilactone serves as a scaffolding for the three catechol functionalities that provide hexadentate coordination for the tightly ligated iron(2+) atoms. Plays an essential role in the assembly of the enterobactin by catalyzing the transfer of the 4'-phosphopantetheine (Ppant) moiety from coenzyme A to the apo-domains of both EntB (ArCP domain) and EntF (PCP domain) to yield their holo-forms which make them competent for the activation of 2,3-dihydroxybenzoate (DHB) and L-serine, respectively. This chain is Enterobactin synthase component D, found in Salmonella typhi.